The chain runs to 278 residues: MMLAQVNSIAFRLFGIPVYWYAIIIVSGIALAVWLSSREAVRVGLKEDDVFDFMLWGLPAAIVGARLYYVAFQWQDYVDNPIEIFFTRNGGLAIYGGLIGGGLALFFFTRHRFISTWTFLDIAAPSVILAQAIGRWGNFMNHEAYGPATTRQFLENLHLPTFIIDNMNINGTYHQPTFLYESVWNVLGFIVLVLLRKKPHFLKEGEVFLGYIIWYSFGRFFIEGLRMDSLYAFSNIRVSQLLSLVMFVAAIVIVIVRRRNPNLKFYNREKQKKKITTS.

Transmembrane regions (helical) follow at residues 13-33, 50-70, and 89-109; these read LFGIPVYWYAIIIVSGIALAV, VFDFMLWGLPAAIVGARLYYV, and NGGLAIYGGLIGGGLALFFFT. Arginine 135 provides a ligand contact to a 1,2-diacyl-sn-glycero-3-phospho-(1'-sn-glycerol). 3 helical membrane passes run 175 to 195, 205 to 225, and 236 to 256; these read QPTFLYESVWNVLGFIVLVLL, GEVFLGYIIWYSFGRFFIEGL, and IRVSQLLSLVMFVAAIVIVIV.

It belongs to the Lgt family.

The protein resides in the cell membrane. It catalyses the reaction L-cysteinyl-[prolipoprotein] + a 1,2-diacyl-sn-glycero-3-phospho-(1'-sn-glycerol) = an S-1,2-diacyl-sn-glyceryl-L-cysteinyl-[prolipoprotein] + sn-glycerol 1-phosphate + H(+). It participates in protein modification; lipoprotein biosynthesis (diacylglyceryl transfer). Catalyzes the transfer of the diacylglyceryl group from phosphatidylglycerol to the sulfhydryl group of the N-terminal cysteine of a prolipoprotein, the first step in the formation of mature lipoproteins. This is Phosphatidylglycerol--prolipoprotein diacylglyceryl transferase from Enterococcus faecalis (strain ATCC 700802 / V583).